Reading from the N-terminus, the 838-residue chain is Glycogen phosphorylase, brain form (838 aa).

N-acetylalanine is present on alanine 2. Serine 15 bears the Phosphoserine mark. Residues aspartate 43, tyrosine 197, and arginine 310 each coordinate AMP. Tyrosine 197 carries the post-translational modification Phosphotyrosine. The residue at position 473 (tyrosine 473) is a Phosphotyrosine. Phosphoserine is present on serine 524. Residue lysine 569 participates in pyridoxal 5'-phosphate binding. The segment at 677–678 is pyridoxal 5'-phosphate; the sequence is TG. Position 681 is an N6-(pyridoxal phosphate)lysine (lysine 681).

The protein belongs to the glycogen phosphorylase family. As to quaternary structure, homodimer. Dimers associate into a tetramer to form the enzymatically active phosphorylase A. It depends on pyridoxal 5'-phosphate as a cofactor. Post-translationally, phosphorylation of Ser-15 converts phosphorylase B (unphosphorylated) to phosphorylase A.

The catalysed reaction is [(1-&gt;4)-alpha-D-glucosyl](n) + phosphate = [(1-&gt;4)-alpha-D-glucosyl](n-1) + alpha-D-glucose 1-phosphate. Its activity is regulated as follows. Activity of phosphorylase is controlled both by allosteric means (through the non-covalent binding of metabolites) and by covalent modification. Thus AMP allosterically activates, whereas ATP, ADP, and glucose-6-phosphate allosterically inhibit, phosphorylase B. Its function is as follows. Glycogen phosphorylase that regulates glycogen mobilization. Phosphorylase is an important allosteric enzyme in carbohydrate metabolism. Enzymes from different sources differ in their regulatory mechanisms and in their natural substrates. However, all known phosphorylases share catalytic and structural properties. This Rattus norvegicus (Rat) protein is Glycogen phosphorylase, brain form (Pygb).